Consider the following 146-residue polypeptide: 3-dehydroquinate dehydratase (146 aa).

The active-site Proton acceptor is the tyrosine 22. Substrate contacts are provided by asparagine 73, histidine 79, and aspartate 86. Histidine 99 serves as the catalytic Proton donor. Residues 100–101 and arginine 110 contribute to the substrate site; that span reads IS.

The protein belongs to the type-II 3-dehydroquinase family. As to quaternary structure, homododecamer.

It catalyses the reaction 3-dehydroquinate = 3-dehydroshikimate + H2O. It functions in the pathway metabolic intermediate biosynthesis; chorismate biosynthesis; chorismate from D-erythrose 4-phosphate and phosphoenolpyruvate: step 3/7. Functionally, catalyzes a trans-dehydration via an enolate intermediate. This is 3-dehydroquinate dehydratase from Prochlorococcus marinus subsp. pastoris (strain CCMP1986 / NIES-2087 / MED4).